The following is a 349-amino-acid chain: NADH-ubiquinone oxidoreductase chain 2 (349 aa).

Transmembrane regions (helical) follow at residues 3–23, 25–45, 66–86, 98–118, 149–171, 178–197, 202–219, 240–260, 274–294, and 319–339; these read PYVL…TFAS, HWLL…PIMA, AAAM…EWEI, VMLA…LPEV, INSS…GGLN, ILAY…LQYA, LLSL…FLTL, LAAL…LSGF, GLPL…YFYL, and FTLI…LLPL.

This sequence belongs to the complex I subunit 2 family.

It localises to the mitochondrion inner membrane. The catalysed reaction is a ubiquinone + NADH + 5 H(+)(in) = a ubiquinol + NAD(+) + 4 H(+)(out). Core subunit of the mitochondrial membrane respiratory chain NADH dehydrogenase (Complex I) that is believed to belong to the minimal assembly required for catalysis. Complex I functions in the transfer of electrons from NADH to the respiratory chain. The immediate electron acceptor for the enzyme is believed to be ubiquinone. This is NADH-ubiquinone oxidoreductase chain 2 (MT-ND2) from Salmo salar (Atlantic salmon).